Consider the following 185-residue polypeptide: Ribosome-recycling factor (185 aa).

It belongs to the RRF family.

It localises to the cytoplasm. Its function is as follows. Responsible for the release of ribosomes from messenger RNA at the termination of protein biosynthesis. May increase the efficiency of translation by recycling ribosomes from one round of translation to another. The protein is Ribosome-recycling factor of Clostridium kluyveri (strain NBRC 12016).